Reading from the N-terminus, the 112-residue chain is MKKIEAIIKPFKLDEVKEALQEVGLQGITVTEAKGFGRQKGHTELYRGAEYVVDFLPKVKVEVVLADENAEAVIEAIRNAAQTGRIGDGKIFVSNVEEVIRIRTGETGLDAI.

At Y51 the chain carries O-UMP-tyrosine.

Belongs to the P(II) protein family. Homotrimer.

In terms of biological role, in nitrogen-limiting conditions, when the ratio of Gln to 2-ketoglutarate decreases, P-II is uridylylated to P-II-UMP. P-II-UMP allows the deadenylation of glutamine synthetase (GS), thus activating the enzyme. Conversely, in nitrogen excess P-II is deuridylated and promotes the adenylation of GS. P-II indirectly controls the transcription of the GS gene (glnA). P-II prevents NR-II-catalyzed conversion of NR-I to NR-I-phosphate, the transcriptional activator of glnA. When P-II is uridylylated to P-II-UMP, these events are reversed. The polypeptide is Nitrogen regulatory protein P-II (glnB) (Rhizobium meliloti (strain 1021) (Ensifer meliloti)).